Consider the following 417-residue polypeptide: Putative F-box protein At4g21240 (417 aa).

A compositionally biased stretch (acidic residues) spans 1–12 (MDRREEEEEETG). Residues 1-25 (MDRREEEEEETGYGEKGTRNQSKED) are disordered. A compositionally biased stretch (basic and acidic residues) spans 16–25 (KGTRNQSKED). An F-box domain is found at 30 to 76 (GKIFELIPLDMIPDILLRLPAKSAVRFRIVSKLWLSITTRPYFIRSF).

The chain is Putative F-box protein At4g21240 from Arabidopsis thaliana (Mouse-ear cress).